Here is a 206-residue protein sequence, read N- to C-terminus: MSCPEHIVQLMHKYLDGDILPEDETRLKEHLQSCEGCKKHLHEMEKSIALVQSTSHLTAPANFTANVLANLPKEKRTASINRWLKAHPFLVAAALFAILMGGSFFSSWKNDHDFSVSSQPNLVVKNNTVIVPEGEVVKGDVTVKNGKLIIEGKVDGDVTIVNGEKYTASAGQVTGQIHEINEVFDWIWYKIKSTGKSVFGVKESKE.

At Met1–His87 the chain is on the cytoplasmic side. 3 residues coordinate Zn(2+): His30, Cys34, and Cys37. The helical transmembrane segment at Pro88 to Trp108 threads the bilayer. The Extracellular portion of the chain corresponds to Lys109–Glu206.

This sequence belongs to the zinc-associated anti-sigma factor (ZAS) superfamily. Anti-sigma-W factor family. Zn(2+) serves as cofactor. Is processed by three successive proteolytic events. First, the extracellular region of RsiW is cleaved by PrsW (Site-1 cleavage) in response to cell envelope stresses. Next, it undergoes cleavage at an intramembrane site (Site-2 cleavage) mediated by RasP. This cleavage uncovers a cryptic proteolytic tag with conserved alanine residues in the transmembrane segment, that is recognized mainly by the ClpXP protease, which completely degrades the protein in the cytoplasm and leads to the induction of the sigma-W-controlled genes.

Its subcellular location is the membrane. Its function is as follows. Is the anti-sigma factor for SigW. The presence of RsiW leads to the inactivation of SigW, and its proteolytic destruction to sigma-W activation. In Bacillus licheniformis (strain ATCC 14580 / DSM 13 / JCM 2505 / CCUG 7422 / NBRC 12200 / NCIMB 9375 / NCTC 10341 / NRRL NRS-1264 / Gibson 46), this protein is Anti-sigma-W factor RsiW (rsiW).